Here is a 685-residue protein sequence, read N- to C-terminus: Threonine--tRNA ligase (685 aa).

Positions 1 to 28 are disordered; sequence MTSPAPEHSAAPLRVPAGTTAGTAVREA. In terms of domain architecture, TGS spans 1 to 65; sequence MTSPAPEHSA…EVDVDVEPVA (65 aa). Residues 262–568 are catalytic; it reads DHRKLGTELD…LTEHYAGAFP (307 aa). Residues cysteine 367, histidine 418, and histidine 545 each coordinate Zn(2+).

The protein belongs to the class-II aminoacyl-tRNA synthetase family. As to quaternary structure, homodimer. Zn(2+) is required as a cofactor.

The protein localises to the cytoplasm. It carries out the reaction tRNA(Thr) + L-threonine + ATP = L-threonyl-tRNA(Thr) + AMP + diphosphate + H(+). Its function is as follows. Catalyzes the attachment of threonine to tRNA(Thr) in a two-step reaction: L-threonine is first activated by ATP to form Thr-AMP and then transferred to the acceptor end of tRNA(Thr). Also edits incorrectly charged L-seryl-tRNA(Thr). This is Threonine--tRNA ligase from Rhodococcus erythropolis (strain PR4 / NBRC 100887).